The primary structure comprises 312 residues: Malate dehydrogenase (312 aa).

NAD(+)-binding positions include 12–17 and D36; that span reads GAGFTG. Residues R87 and R93 each coordinate substrate. Residues N100 and 123–125 each bind NAD(+); that span reads LTN. N125 serves as a coordination point for substrate. Position 149 is a phosphoserine (S149). Position 156 (R156) interacts with substrate. H180 (proton acceptor) is an active-site residue.

Belongs to the LDH/MDH superfamily. MDH type 3 family.

It catalyses the reaction (S)-malate + NAD(+) = oxaloacetate + NADH + H(+). Catalyzes the reversible oxidation of malate to oxaloacetate. The protein is Malate dehydrogenase of Geobacillus sp. (strain WCH70).